The following is a 430-amino-acid chain: Forkhead box protein N2 (430 aa).

The interval Met1 to Val47 is disordered. Positions Lys108 to Ser204 form a DNA-binding region, fork-head. Disordered regions lie at residues Asn299–Ser326 and Pro338–Gln391. Residues Asp355 to Leu366 show a composition bias toward acidic residues. The span at His381 to Ser390 shows a compositional bias: basic and acidic residues.

As to expression, expressed in the developing eye from stage 23. Localized to the prospective retinal layer and a layer of cells lateral to the ventricular zone. At stage 29, expression extends to the branchial arches and the brain. At stage 33/34, expressed in the vagal ganglion. At stage 36, expression in the retina decreases. Not expressed in the eye lens.

It localises to the nucleus. The polypeptide is Forkhead box protein N2 (Xenopus laevis (African clawed frog)).